A 226-amino-acid chain; its full sequence is Phosphoglycolate phosphatase (226 aa).

Asp-8 serves as the catalytic Nucleophile. Mg(2+)-binding residues include Asp-8 and Asp-10. Lys-152 provides a ligand contact to substrate. Mg(2+)-binding residues include Asp-175 and Asp-179.

The protein belongs to the archaeal SPP-like hydrolase family. Mg(2+) serves as cofactor.

It carries out the reaction 2-phosphoglycolate + H2O = glycolate + phosphate. Its function is as follows. Catalyzes the dephosphorylation of 2-phosphoglycolate. The chain is Phosphoglycolate phosphatase from Natronomonas pharaonis (strain ATCC 35678 / DSM 2160 / CIP 103997 / JCM 8858 / NBRC 14720 / NCIMB 2260 / Gabara) (Halobacterium pharaonis).